The sequence spans 337 residues: tRNA N6-adenosine threonylcarbamoyltransferase (337 aa).

Positions 111 and 115 each coordinate Fe cation. Substrate contacts are provided by residues 134-138, aspartate 167, glycine 180, and asparagine 272; that span reads LVSGG. Aspartate 300 contributes to the Fe cation binding site.

Belongs to the KAE1 / TsaD family. The cofactor is Fe(2+).

The protein localises to the cytoplasm. The enzyme catalyses L-threonylcarbamoyladenylate + adenosine(37) in tRNA = N(6)-L-threonylcarbamoyladenosine(37) in tRNA + AMP + H(+). Functionally, required for the formation of a threonylcarbamoyl group on adenosine at position 37 (t(6)A37) in tRNAs that read codons beginning with adenine. Is involved in the transfer of the threonylcarbamoyl moiety of threonylcarbamoyl-AMP (TC-AMP) to the N6 group of A37, together with TsaE and TsaB. TsaD likely plays a direct catalytic role in this reaction. The sequence is that of tRNA N6-adenosine threonylcarbamoyltransferase from Methylococcus capsulatus (strain ATCC 33009 / NCIMB 11132 / Bath).